Consider the following 565-residue polypeptide: CTP synthase (565 aa).

Positions 1–272 (MARPKNVKHI…DLRVLKKLGL (272 aa)) are amidoligase domain. S18 contacts CTP. Residue S18 coordinates UTP. 19–24 (SLGKGI) lines the ATP pocket. Residue Y59 coordinates L-glutamine. D76 provides a ligand contact to ATP. D76 and E146 together coordinate Mg(2+). CTP contacts are provided by residues 153–155 (DIE), 193–198 (KTKPTQ), and K229. Residues 193 to 198 (KTKPTQ) and K229 contribute to the UTP site. In terms of domain architecture, Glutamine amidotransferase type-1 spans 299–543 (TIGICGKYTE…VAAAKEYAHG (245 aa)). G363 contacts L-glutamine. C390 (nucleophile; for glutamine hydrolysis) is an active-site residue. Residues 391-394 (LGMQ), E414, and R471 each bind L-glutamine. Active-site residues include H516 and E518.

Belongs to the CTP synthase family. Homotetramer.

The enzyme catalyses UTP + L-glutamine + ATP + H2O = CTP + L-glutamate + ADP + phosphate + 2 H(+). It carries out the reaction L-glutamine + H2O = L-glutamate + NH4(+). The catalysed reaction is UTP + NH4(+) + ATP = CTP + ADP + phosphate + 2 H(+). Its pathway is pyrimidine metabolism; CTP biosynthesis via de novo pathway; CTP from UDP: step 2/2. Its activity is regulated as follows. Allosterically activated by GTP, when glutamine is the substrate; GTP has no effect on the reaction when ammonia is the substrate. The allosteric effector GTP functions by stabilizing the protein conformation that binds the tetrahedral intermediate(s) formed during glutamine hydrolysis. Inhibited by the product CTP, via allosteric rather than competitive inhibition. In terms of biological role, catalyzes the ATP-dependent amination of UTP to CTP with either L-glutamine or ammonia as the source of nitrogen. Regulates intracellular CTP levels through interactions with the four ribonucleotide triphosphates. The sequence is that of CTP synthase from Pelodictyon phaeoclathratiforme (strain DSM 5477 / BU-1).